Reading from the N-terminus, the 84-residue chain is Large ribosomal subunit protein bL27 (84 aa).

A disordered region spans residues 1 to 25; the sequence is MSHKKAGGSTRNGRDSNAQRRGVKK.

The protein belongs to the bacterial ribosomal protein bL27 family.

This is Large ribosomal subunit protein bL27 from Desulforapulum autotrophicum (strain ATCC 43914 / DSM 3382 / VKM B-1955 / HRM2) (Desulfobacterium autotrophicum).